A 337-amino-acid polypeptide reads, in one-letter code: tRNA N6-adenosine threonylcarbamoyltransferase (337 aa).

Positions 111 and 115 each coordinate Fe cation. Substrate is bound by residues 134-138 (LVSGG), D167, G180, and N272. D300 provides a ligand contact to Fe cation.

It belongs to the KAE1 / TsaD family. Fe(2+) is required as a cofactor.

Its subcellular location is the cytoplasm. It carries out the reaction L-threonylcarbamoyladenylate + adenosine(37) in tRNA = N(6)-L-threonylcarbamoyladenosine(37) in tRNA + AMP + H(+). Functionally, required for the formation of a threonylcarbamoyl group on adenosine at position 37 (t(6)A37) in tRNAs that read codons beginning with adenine. Is involved in the transfer of the threonylcarbamoyl moiety of threonylcarbamoyl-AMP (TC-AMP) to the N6 group of A37, together with TsaE and TsaB. TsaD likely plays a direct catalytic role in this reaction. This chain is tRNA N6-adenosine threonylcarbamoyltransferase, found in Salmonella agona (strain SL483).